The sequence spans 310 residues: tRNA uridine(34) hydroxylase (310 aa).

Positions 127-225 (KNQNTIVIDT…YLDDIPKEKN (99 aa)) constitute a Rhodanese domain. Cysteine 185 serves as the catalytic Cysteine persulfide intermediate.

The protein belongs to the TrhO family.

It catalyses the reaction uridine(34) in tRNA + AH2 + O2 = 5-hydroxyuridine(34) in tRNA + A + H2O. In terms of biological role, catalyzes oxygen-dependent 5-hydroxyuridine (ho5U) modification at position 34 in tRNAs. The chain is tRNA uridine(34) hydroxylase from Prochlorococcus marinus (strain MIT 9312).